The chain runs to 126 residues: Large ribosomal subunit protein bL12 (126 aa).

It belongs to the bacterial ribosomal protein bL12 family. In terms of assembly, homodimer. Part of the ribosomal stalk of the 50S ribosomal subunit. Forms a multimeric L10(L12)X complex, where L10 forms an elongated spine to which 2 to 4 L12 dimers bind in a sequential fashion. Binds GTP-bound translation factors.

Its function is as follows. Forms part of the ribosomal stalk which helps the ribosome interact with GTP-bound translation factors. Is thus essential for accurate translation. The sequence is that of Large ribosomal subunit protein bL12 from Geobacter sp. (strain M21).